The chain runs to 68 residues: uncharacterized protein (68 aa).

In terms of domain architecture, HMA spans 2 to 67; that stretch reads KTITLNIKGI…VIEDAGFDAT (66 aa). A metal cation contacts are provided by cysteine 13 and cysteine 16.

This is an uncharacterized protein from Haemophilus influenzae (strain ATCC 51907 / DSM 11121 / KW20 / Rd).